A 321-amino-acid polypeptide reads, in one-letter code: Olfactory receptor 51V1 (321 aa).

Topologically, residues 1-34 (MFLSSRMITSVSPSTSTNSSFLLTGFSGMEQQYP) are extracellular. N-linked (GlcNAc...) asparagine glycosylation is present at Asn-18. Residues 35-55 (WLSIPFSSIYAMVLLGNCMVL) traverse the membrane as a helical segment. The Cytoplasmic portion of the chain corresponds to 56–63 (HVIWTEPS). Residues 64-84 (LHQPMFYFLSMLALTDLCMGL) traverse the membrane as a helical segment. Residues 85-108 (STVYTVLGILWGIIREISLDSCIA) lie on the Extracellular side of the membrane. A disulfide bridge links Cys-106 with Cys-188. A helical membrane pass occupies residues 109–129 (QSYFIHGLSFMESSVLLTMAF). At 130–148 (DRYIAICNPLRYSSILTNS) the chain is on the cytoplasmic side. A helical transmembrane segment spans residues 149–169 (RIIKIGLTIIGRSFFFITPPI). The Extracellular portion of the chain corresponds to 170–205 (ICLKFFNYCHFHILSHSFCLHQDLLRLACSDIRFNS). A helical transmembrane segment spans residues 206–226 (YYALMLVICILLLDAILILFS). Residues 227–246 (YILILKSVLAVASQEERHKL) lie on the Cytoplasmic side of the membrane. The chain crosses the membrane as a helical span at residues 247-267 (FQTCISHICAVLVFYIPIISL). The Extracellular portion of the chain corresponds to 268 to 282 (TMVHRFGKHLSPVAH). Residues 283-303 (VLIGNIYILFPPLMNPIIYSV) form a helical membrane-spanning segment. The Cytoplasmic segment spans residues 304 to 321 (KTQQIHTRMLRLFSLKRY).

It belongs to the G-protein coupled receptor 1 family.

It is found in the cell membrane. Odorant receptor. The polypeptide is Olfactory receptor 51V1 (OR51V1) (Homo sapiens (Human)).